The primary structure comprises 533 residues: Retinoic acid receptor RXR-beta (533 aa).

The tract at residues 1 to 23 (MSWAARPPFLPQRHAAGQCGPVG) is disordered. A modulating region spans residues 1–204 (MSWAARPPFL…PGGPGAGKRL (204 aa)). Omega-N-methylarginine is present on arginine 25. A disordered region spans residues 36–181 (WRRRRPWLDP…GSGPPEDVKP (146 aa)). Over residues 46–61 (AAAAAAAVAGGEQQTP) the composition is skewed to low complexity. Positions 67-82 (EAGRDGMGDSGRDSRS) are enriched in basic and acidic residues. Composition is skewed to pro residues over residues 89–109 (NPLP…PPST) and 118–131 (APPP…PLGS). The segment covering 132 to 143 (PFPVISSSMGSP) has biased composition (low complexity). Pro residues predominate over residues 144–153 (GLPPPAPPGF). NR C4-type zinc fingers lie at residues 205-225 (CAIC…CEGC) and 241-265 (CRDN…YQKC). Positions 205–270 (CAICGDRSSG…RYQKCLATGM (66 aa)) form a DNA-binding region, nuclear receptor. The hinge stretch occupies residues 271–295 (KREAVQEERQRGKDKDGDGEGAGGA). The span at 276 to 288 (QEERQRGKDKDGD) shows a compositional bias: basic and acidic residues. Disordered stretches follow at residues 276–299 (QEER…PEEM) and 313–336 (QKSD…NDPV). Positions 296–529 (PEEMPVDRIL…TFLMEMLEAP (234 aa)) constitute an NR LBD domain. Positions 320 to 329 (EGPGGTGGSG) are enriched in gly residues.

Belongs to the nuclear hormone receptor family. NR2 subfamily. As to quaternary structure, homodimer (in vitro). Heterodimer with other retinoic acid receptor family members. Binds DNA preferentially as a RAR/RXR heterodimer. Interacts with NR1H3. Interacts with AKAP13. Expressed in aortic endothelial cells (at protein level). Expressed in monocytes. Expressed in a variety of tumor cell lines.

Its subcellular location is the nucleus. The protein resides in the cytoplasm. Its function is as follows. Receptor for retinoic acid. Retinoic acid receptors bind as heterodimers to their target response elements in response to their ligands, all-trans or 9-cis retinoic acid, and regulate gene expression in various biological processes. The RAR/RXR heterodimers bind to the retinoic acid response elements (RARE). This chain is Retinoic acid receptor RXR-beta (RXRB), found in Homo sapiens (Human).